The sequence spans 76 residues: Small ribosomal subunit protein bS18 (76 aa).

This sequence belongs to the bacterial ribosomal protein bS18 family. Part of the 30S ribosomal subunit. Forms a tight heterodimer with protein bS6.

In terms of biological role, binds as a heterodimer with protein bS6 to the central domain of the 16S rRNA, where it helps stabilize the platform of the 30S subunit. The polypeptide is Small ribosomal subunit protein bS18 (Carboxydothermus hydrogenoformans (strain ATCC BAA-161 / DSM 6008 / Z-2901)).